We begin with the raw amino-acid sequence, 58 residues long: uncharacterized protein (58 aa).

Helical transmembrane passes span 7-27 (IFDIVMYIIFGVLSLFLVAKT) and 29-49 (YGTGVLVFVAILYLAVIAYKI).

The protein localises to the cell membrane. This is an uncharacterized protein from Bacillus subtilis (strain 168).